The chain runs to 192 residues: Phage-like element PBSX protein XkdU (192 aa).

This sequence to B.subtilis YqcA.

This chain is Phage-like element PBSX protein XkdU (xkdU), found in Bacillus subtilis (strain 168).